A 343-amino-acid polypeptide reads, in one-letter code: NADH dehydrogenase [ubiquinone] 1 alpha subcomplex subunit 10, mitochondrial (343 aa).

Residues 1-23 (MALRLLRLVPPRVGGIHTSVQFK) constitute a mitochondrion transit peptide. Lysine 110 carries the post-translational modification N6-acetyllysine; alternate. Position 110 is an N6-succinyllysine; alternate (lysine 110). Residue serine 238 is modified to Phosphoserine; by PINK1.

Belongs to the complex I NDUFA10 subunit family. In terms of assembly, complex I is composed of 45 different subunits. This a component of the hydrophobic protein fraction. Requires FAD as cofactor. Phosphorylation at Ser-238 by PINK1 is required for the binding and/or reduction of the complex I substrate ubiquinone.

The protein localises to the mitochondrion matrix. Functionally, accessory subunit of the mitochondrial membrane respiratory chain NADH dehydrogenase (Complex I), that is believed not to be involved in catalysis. Complex I functions in the transfer of electrons from NADH to the respiratory chain. The immediate electron acceptor for the enzyme is believed to be ubiquinone. In Bos taurus (Bovine), this protein is NADH dehydrogenase [ubiquinone] 1 alpha subcomplex subunit 10, mitochondrial (NDUFA10).